The chain runs to 68 residues: ATP synthase F(0) complex subunit 8 (68 aa).

A helical transmembrane segment spans residues 8-24; that stretch reads TWSITIVSMIITLFIMF. N6-acetyllysine; alternate is present on lysine 54. Residue lysine 54 is modified to N6-succinyllysine; alternate. Lysine 57 bears the N6-acetyllysine mark.

Belongs to the ATPase protein 8 family. Component of the ATP synthase complex composed at least of ATP5F1A/subunit alpha, ATP5F1B/subunit beta, ATP5MC1/subunit c (homooctomer), MT-ATP6/subunit a, MT-ATP8/subunit 8, ATP5ME/subunit e, ATP5MF/subunit f, ATP5MG/subunit g, ATP5MK/subunit k, ATP5MJ/subunit j, ATP5F1C/subunit gamma, ATP5F1D/subunit delta, ATP5F1E/subunit epsilon, ATP5PF/subunit F6, ATP5PB/subunit b, ATP5PD/subunit d, ATP5PO/subunit OSCP. ATP synthase complex consists of a soluble F(1) head domain (subunits alpha(3) and beta(3)) - the catalytic core - and a membrane F(0) domain - the membrane proton channel (subunits c, a, 8, e, f, g, k and j). These two domains are linked by a central stalk (subunits gamma, delta, and epsilon) rotating inside the F1 region and a stationary peripheral stalk (subunits F6, b, d, and OSCP). Interacts with PRICKLE3.

It localises to the mitochondrion membrane. Its function is as follows. Subunit 8, of the mitochondrial membrane ATP synthase complex (F(1)F(0) ATP synthase or Complex V) that produces ATP from ADP in the presence of a proton gradient across the membrane which is generated by electron transport complexes of the respiratory chain. ATP synthase complex consist of a soluble F(1) head domain - the catalytic core - and a membrane F(1) domain - the membrane proton channel. These two domains are linked by a central stalk rotating inside the F(1) region and a stationary peripheral stalk. During catalysis, ATP synthesis in the catalytic domain of F(1) is coupled via a rotary mechanism of the central stalk subunits to proton translocation. In vivo, can only synthesize ATP although its ATP hydrolase activity can be activated artificially in vitro. Part of the complex F(0) domain. The chain is ATP synthase F(0) complex subunit 8 from Ceratotherium simum (White rhinoceros).